The chain runs to 45 residues: MTKRTFGGTSRKRKRVSGFRVRMRSHTGRRVVRTRRKRGRSRLTV.

The tract at residues 1-45 is disordered; sequence MTKRTFGGTSRKRKRVSGFRVRMRSHTGRRVVRTRRKRGRSRLTV. Residues 10–45 are compositionally biased toward basic residues; the sequence is SRKRKRVSGFRVRMRSHTGRRVVRTRRKRGRSRLTV.

This sequence belongs to the bacterial ribosomal protein bL34 family.

In Prochlorococcus marinus (strain NATL2A), this protein is Large ribosomal subunit protein bL34.